A 96-amino-acid polypeptide reads, in one-letter code: Small ribosomal subunit protein bS16m (96 aa).

The protein belongs to the bacterial ribosomal protein bS16 family. As to quaternary structure, component of the mitochondrial small ribosomal subunit (mt-SSU). Mature yeast 74S mitochondrial ribosomes consist of a small (37S) and a large (54S) subunit. The 37S small subunit contains a 15S ribosomal RNA (15S mt-rRNA) and at least 32 different proteins. The 54S large subunit contains a 21S rRNA (21S mt-rRNA) and at least 45 different proteins.

It is found in the mitochondrion. Functionally, component of the mitochondrial ribosome (mitoribosome), a dedicated translation machinery responsible for the synthesis of mitochondrial genome-encoded proteins, including at least some of the essential transmembrane subunits of the mitochondrial respiratory chain. The mitoribosomes are attached to the mitochondrial inner membrane and translation products are cotranslationally integrated into the membrane. The protein is Small ribosomal subunit protein bS16m (mrps16) of Schizosaccharomyces pombe (strain 972 / ATCC 24843) (Fission yeast).